Consider the following 152-residue polypeptide: UPF0719 transmembrane protein MT2674.1 (152 aa).

Transmembrane regions (helical) follow at residues 21–41 (VATV…FLMV), 62–82 (VVLA…AIYA), 92–112 (IGVA…LVIL), and 131–151 (PAVF…AAAL).

The protein belongs to the UPF0719 family.

It localises to the cell membrane. The polypeptide is UPF0719 transmembrane protein MT2674.1 (Mycobacterium tuberculosis (strain CDC 1551 / Oshkosh)).